Here is a 136-residue protein sequence, read N- to C-terminus: Large ribosomal subunit protein bL21 (136 aa).

Residues 107–136 (RAAADRKTAPKRASAKAAADQTTAAQATAE) are disordered. The segment covering 121-136 (AKAAADQTTAAQATAE) has biased composition (low complexity).

It belongs to the bacterial ribosomal protein bL21 family. In terms of assembly, part of the 50S ribosomal subunit. Contacts protein L20.

Its function is as follows. This protein binds to 23S rRNA in the presence of protein L20. This chain is Large ribosomal subunit protein bL21, found in Acidothermus cellulolyticus (strain ATCC 43068 / DSM 8971 / 11B).